A 154-amino-acid polypeptide reads, in one-letter code: Large ribosomal subunit protein uL15 (154 aa).

The segment covering 1–13 (MKLHELKPAEGSR) has biased composition (basic and acidic residues). Residues 1–52 (MKLHELKPAEGSRKNRKRVGRGPGGTDKTAGRGHKGQKSRSGAGKGSFFEGG) are disordered.

The protein belongs to the universal ribosomal protein uL15 family. Part of the 50S ribosomal subunit.

Its function is as follows. Binds to the 23S rRNA. The sequence is that of Large ribosomal subunit protein uL15 from Deinococcus deserti (strain DSM 17065 / CIP 109153 / LMG 22923 / VCD115).